A 255-amino-acid polypeptide reads, in one-letter code: MMVEMKAVNENLKEQFVKRNKLAICATLRELKKNDTSLMVHHSHGQFISKILDVVPDNNLFVFDLGGIERENNRALYAGSLSFVAEPAGAKVEFNAEIAKTVTYDGLPAFSAQIPELLYLIQRRTYFRINTPLWPPLTCRGELPDESVFLFTIKDLSLGGLSLYTDRDTTGLLTEGDIIKSVEMDLADHGFFCVDLQFVGQAMVKVVDNKGEVQLTQRLSFKFPSLNAAQERDLQQVIFELERLQNEKKKRFQEL.

Residues 122–240 (QRRTYFRINT…ERDLQQVIFE (119 aa)) form the PilZ domain.

It belongs to the YcgR family. Monomer. Interacts with the flagellar basal bodies.

It is found in the bacterial flagellum basal body. Functionally, acts as a flagellar brake, regulating swimming and swarming in a bis-(3'-5') cyclic diguanylic acid (c-di-GMP)-dependent manner. Binds 1 c-di-GMP dimer per subunit. Increasing levels of c-di-GMP lead to decreased motility. The polypeptide is Flagellar brake protein YcgR (Pectobacterium carotovorum subsp. carotovorum (strain PC1)).